A 594-amino-acid polypeptide reads, in one-letter code: Interactor of HORMAD1 protein 1 (594 aa).

Coiled coils occupy residues 109-135 (VGKS…SETL), 165-189 (QSIL…NDLV), and 219-245 (EMKS…CEQL). Residues 434–443 (VEMRGKDKKQ) show a composition bias toward basic and acidic residues. Positions 434-454 (VEMRGKDKKQQPRKAHRAHRG) are disordered. A compositionally biased stretch (basic residues) spans 444–454 (QPRKAHRAHRG). Phosphoserine occurs at positions 588 and 589.

Part of the MCD recombinosome complex, at least composed of IHO1, REC114 and MEI4. Interacts with REC114. Interacts with MEI4. Interacts with HORMAD1. Interacts with ANKRD31.

The protein localises to the chromosome. Functionally, required for DNA double-strand breaks (DSBs) formation in unsynapsed regions during meiotic recombination. Probably acts by forming a complex with MEI4 and REC114, which activates DSBs formation in unsynapsed regions, an essential step to ensure completion of synapsis. Not required for HORMAD1 functions in pairing-independent synaptonemal complex formation, ATR recruitment to unsynapsed axes, meiotic silencing of unsynapsed chromatin (MSUC) or meiotic surveillance. The protein is Interactor of HORMAD1 protein 1 of Homo sapiens (Human).